The primary structure comprises 322 residues: Replication factor C small subunit (322 aa).

ATP is bound at residue 50–57; the sequence is GPAGTGKT.

Belongs to the activator 1 small subunits family. RfcS subfamily. Heteromultimer composed of small subunits (RfcS) and large subunits (RfcL).

In terms of biological role, part of the RFC clamp loader complex which loads the PCNA sliding clamp onto DNA. The chain is Replication factor C small subunit from Halobacterium salinarum (strain ATCC 700922 / JCM 11081 / NRC-1) (Halobacterium halobium).